Consider the following 643-residue polypeptide: NADH-ubiquinone oxidoreductase chain 5 (643 aa).

The next 16 helical transmembrane spans lie at 7–27, 64–84, 114–134, 140–160, 163–183, 208–228, 230–250, 277–297, 301–321, 338–358, 398–418, 437–457, 486–506, 511–531, 555–575, and 615–635; these read IIIL…VFFF, LLKT…IFNI, TFLS…YYYM, PNNF…LTST, IFLL…LISW, ILLF…PEIF, ISAP…AAAG, SSTM…LYAC, FNTW…TTAI, LGLM…FHIC, AACI…PGFY, IVLS…IIFF, ALGT…VPII, VLKT…ISIL, FYEN…SLSL, and YLLF…TTIS.

Belongs to the complex I subunit 5 family.

Its subcellular location is the mitochondrion inner membrane. The catalysed reaction is a ubiquinone + NADH + 5 H(+)(in) = a ubiquinol + NAD(+) + 4 H(+)(out). Core subunit of the mitochondrial membrane respiratory chain NADH dehydrogenase (Complex I) that is believed to belong to the minimal assembly required for catalysis. Complex I functions in the transfer of electrons from NADH to the respiratory chain. The immediate electron acceptor for the enzyme is believed to be ubiquinone. The polypeptide is NADH-ubiquinone oxidoreductase chain 5 (ND5) (Patiria pectinifera (Starfish)).